The primary structure comprises 519 residues: Acetylcholine receptor subunit gamma (519 aa).

The N-terminal stretch at 1 to 22 is a signal peptide; it reads MCGGQRPLFLLPLLAVCLGAKG. The Extracellular segment spans residues 23-240; sequence RNQEERLLGD…VVFYLLIQRK (218 aa). N-linked (GlcNAc...) asparagine glycans are attached at residues N52 and N163. Residues C150 and C164 are joined by a disulfide bond. The next 3 membrane-spanning stretches (helical) occupy residues 241-265, 274-292, and 308-329; these read PLFYVINIIAPCVLISSVAILIYFL, CTVAINVLLAQTVFLFLVA, and YLTFLLVVTILIVVNAVVVLNV. The Cytoplasmic portion of the chain corresponds to 330–476; that stretch reads SLRSPHTHSM…WFLVGRVLDR (147 aa). Residues 477–497 form a helical membrane-spanning segment; the sequence is VCFLAMLSLFVCGTAGIFLMA.

It belongs to the ligand-gated ion channel (TC 1.A.9) family. Acetylcholine receptor (TC 1.A.9.1) subfamily. Gamma/CHRNG sub-subfamily. Pentamer of two alpha chains, and one each of the beta, delta, and gamma (in immature muscle) or epsilon (in mature muscle) chains.

It is found in the postsynaptic cell membrane. The protein localises to the cell membrane. The enzyme catalyses K(+)(in) = K(+)(out). It catalyses the reaction Na(+)(in) = Na(+)(out). In terms of biological role, after binding acetylcholine, the AChR responds by an extensive change in conformation that affects all subunits and leads to opening of an ion-conducting channel across the plasma membrane. The chain is Acetylcholine receptor subunit gamma (CHRNG) from Bos taurus (Bovine).